We begin with the raw amino-acid sequence, 1020 residues long: RNA-binding protein 44 (1020 aa).

Disordered regions lie at residues 1 to 23 and 50 to 70; these read MQAT…GHLQ and DGEG…NSSV. Residues 58-70 are compositionally biased toward basic and acidic residues; it reads TDERTNVKENSSV. 6 positions are modified to phosphoserine: Ser-249, Ser-371, Ser-374, Ser-516, Ser-683, and Ser-690. One can recognise an RRM domain in the interval 796–870; sequence FLIHVGGLCP…KSVNVRLVKI (75 aa).

In terms of assembly, homodimer. Interacts with TEX14.

The protein localises to the cytoplasm. Functionally, component of intercellular bridges during meiosis. Intercellular bridges are evolutionarily conserved structures that connect differentiating germ cells. Not required for fertility. The chain is RNA-binding protein 44 (Rbm44) from Rattus norvegicus (Rat).